A 735-amino-acid chain; its full sequence is MRNEPQITPDLVAAHGLKPDEYERILKLIGRVPTFTELGIFSAMWNEHCSYKSSRIHLRGLPTKAPWVIQGPGENAGVIDIGDGQAVVFKMESHNHPSYIEPYQGATTGVGGILRDVFTMGARPIACLNALSFGAPEHPKTRHLVSGVVAGIGGYGNSFGVPTVGGQTRFHTRYDGNILVNAMAVGLADADKIFYAAASGVNMPIVYLGSKTGRDGIHGASMASAEFDDSSEEKRPTVQVGDPFAEKLLLEACLEIMAADCVIAIQDMGAAGLTCSAVEMGAKGDLGVDLDLDAVPTRETGMSAYEMMLSESQERMLMVLKPEKEKEAEAIFRKWGLDFAVVGYTTPSKRFVVKHGGDVMADLPIKELGDEAPLYDRPHVASPALPVIHAREVKAPMDIIPALEKLIATPDLCSKRWIWEQYDHVILGNTVQRPGGDAAVVRVQDGPKGLALTVDVTPRYCEADPYQGGMQAVAEAWRNITAVGGRPLAITDNLNFGNPERPEIMGQFVGCLKGISEACRALDFPVVSGNVSLYNETNGRAILPTPSIGGVGLLDDFTKSASIAFEAEGEAILLIGETHGWLGQSVYLRDVCGREEGAPPPVDLAAEKRIGDVVRGMIHAGTATAAHDLSDGGLLVALAEMAMASGIGARLLAAPASIVPHAYWFGEDQARYLVTVPETEAGRVLAKMRGAGVPCTRIGTTGGSALAIAGEASVEVTTLKTRFESWLPGYMGGAA.

His48 is a catalytic residue. ATP-binding residues include Tyr51 and Lys90. Glu92 is a binding site for Mg(2+). Substrate contacts are provided by residues 93 to 96 (SHNH) and Arg115. Residue His94 is the Proton acceptor of the active site. Asp116 is a Mg(2+) binding site. Substrate is bound at residue Gln239. A Mg(2+)-binding site is contributed by Asp267. 311-313 (ESQ) is a substrate binding site. 2 residues coordinate ATP: Asp492 and Gly529. Asn530 is a binding site for Mg(2+). Residue Ser532 participates in substrate binding.

It belongs to the FGAMS family. In terms of assembly, monomer. Part of the FGAM synthase complex composed of 1 PurL, 1 PurQ and 2 PurS subunits.

The protein localises to the cytoplasm. It catalyses the reaction N(2)-formyl-N(1)-(5-phospho-beta-D-ribosyl)glycinamide + L-glutamine + ATP + H2O = 2-formamido-N(1)-(5-O-phospho-beta-D-ribosyl)acetamidine + L-glutamate + ADP + phosphate + H(+). It participates in purine metabolism; IMP biosynthesis via de novo pathway; 5-amino-1-(5-phospho-D-ribosyl)imidazole from N(2)-formyl-N(1)-(5-phospho-D-ribosyl)glycinamide: step 1/2. Its function is as follows. Part of the phosphoribosylformylglycinamidine synthase complex involved in the purines biosynthetic pathway. Catalyzes the ATP-dependent conversion of formylglycinamide ribonucleotide (FGAR) and glutamine to yield formylglycinamidine ribonucleotide (FGAM) and glutamate. The FGAM synthase complex is composed of three subunits. PurQ produces an ammonia molecule by converting glutamine to glutamate. PurL transfers the ammonia molecule to FGAR to form FGAM in an ATP-dependent manner. PurS interacts with PurQ and PurL and is thought to assist in the transfer of the ammonia molecule from PurQ to PurL. The sequence is that of Phosphoribosylformylglycinamidine synthase subunit PurL from Bradyrhizobium sp. (strain BTAi1 / ATCC BAA-1182).